The primary structure comprises 340 residues: Phosphate acyltransferase (340 aa).

Belongs to the PlsX family. As to quaternary structure, homodimer. Probably interacts with PlsY.

It is found in the cytoplasm. It catalyses the reaction a fatty acyl-[ACP] + phosphate = an acyl phosphate + holo-[ACP]. Its pathway is lipid metabolism; phospholipid metabolism. Catalyzes the reversible formation of acyl-phosphate (acyl-PO(4)) from acyl-[acyl-carrier-protein] (acyl-ACP). This enzyme utilizes acyl-ACP as fatty acyl donor, but not acyl-CoA. In Marinobacter nauticus (strain ATCC 700491 / DSM 11845 / VT8) (Marinobacter aquaeolei), this protein is Phosphate acyltransferase.